Here is a 506-residue protein sequence, read N- to C-terminus: Cysteine protease 1 (506 aa).

Residues 1–21 (MTSSRPSGRDSTGWQETVSNT) are disordered. Cysteine 226 functions as the Nucleophile in the catalytic mechanism. Residues aspartate 399 and histidine 401 contribute to the active site.

Belongs to the peptidase C54 family.

The protein localises to the cytoplasm. Its subcellular location is the nucleus. The protein resides in the preautophagosomal structure. It catalyses the reaction [protein]-C-terminal L-amino acid-glycyl-phosphatidylethanolamide + H2O = [protein]-C-terminal L-amino acid-glycine + a 1,2-diacyl-sn-glycero-3-phosphoethanolamine. Functionally, cysteine protease that plays a key role in cytoplasm to vacuole transport (Cvt) and autophagy by mediating both proteolytic activation and delipidation of ATG8. Required for selective autophagic degradation of the nucleus (nucleophagy) as well as for mitophagy which contributes to regulate mitochondrial quantity and quality by eliminating the mitochondria to a basal level to fulfill cellular energy requirements and preventing excess ROS production. The protease activity is required for proteolytic activation of ATG8: cleaves the C-terminal amino acid of ATG8 to reveal a C-terminal glycine. ATG8 ubiquitin-like activity requires the exposure of the glycine at the C-terminus for its conjugation to phosphatidylethanolamine (PE) and its insertion to membranes, which is necessary for autophagy. The ATG8-PE conjugate mediates tethering between adjacent membranes and stimulates membrane hemifusion, leading to expansion of the autophagosomal membrane during autophagy. In addition to the protease activity, also catalyzes deconjugation of PE-conjugated forms of ATG8 during macroautophagy: ATG8 delipidation is required to release the protein from membranes, which facilitates multiple events during macroautophagy, and especially for efficient autophagosome biogenesis, the assembly of ATG9-containing tubulovesicular clusters into phagophores/autophagosomes, and for the disassembly of PAS-associated ATG components. ATG8 delipidation by ATG4 also recycles ATG8-PE generated on inappropriate membranes to maintain a reservoir of unlipidated ATG8 that is required for autophagosome formation at the PAS. The sequence is that of Cysteine protease 1 (cpr-1) from Neurospora crassa (strain ATCC 24698 / 74-OR23-1A / CBS 708.71 / DSM 1257 / FGSC 987).